Consider the following 136-residue polypeptide: Large ribosomal subunit protein bL19 (136 aa).

It belongs to the bacterial ribosomal protein bL19 family.

Its function is as follows. This protein is located at the 30S-50S ribosomal subunit interface and may play a role in the structure and function of the aminoacyl-tRNA binding site. The sequence is that of Large ribosomal subunit protein bL19 from Xylella fastidiosa (strain M23).